The sequence spans 360 residues: Putative FBD-associated F-box protein At5g56430 (360 aa).

Residues 1-53 (MRNISDLPNDLLVKILSLIPIKVAASTSLLSKRWGSVWKLIPTLDYDGTYSAA) enclose the F-box domain. Kelch repeat units follow at residues 140 to 186 (IRYT…EQLD) and 235 to 285 (VMCS…SVPE). An FBD domain is found at 276 to 326 (KWEQPNSVPECLLVSLETVKWILYKGTQEEKDVVKYLLKNGNFIKTMSIRF).

The sequence is that of Putative FBD-associated F-box protein At5g56430 from Arabidopsis thaliana (Mouse-ear cress).